A 209-amino-acid polypeptide reads, in one-letter code: Ephrin-A2 (209 aa).

Positions 1 to 20 (MAPAQRPLLPLLLLLLPLRA) are cleaved as a signal peptide. An Ephrin RBD domain is found at 30-170 (ADRYAVYWNR…RLKVYVRPTN (141 aa)). A glycan (N-linked (GlcNAc...) asparagine) is linked at Asn-38. Intrachain disulfides connect Cys-69–Cys-110 and Cys-98–Cys-159. Asn-170 and Asn-184 each carry an N-linked (GlcNAc...) asparagine glycan. The GPI-anchor amidated asparagine moiety is linked to residue Asn-184. The propeptide at 185–209 (SSCSGLGGCHLFLTTVPVLWSLLGS) is removed in mature form.

It belongs to the ephrin family. In terms of assembly, binds to the receptor tyrosine kinases EPHA3, EPHA4 and EPHA5. Interacts with EPHA8; activates EPHA8. Expressed in myogenic progenitor cells.

It localises to the cell membrane. Its function is as follows. Cell surface GPI-bound ligand for Eph receptors, a family of receptor tyrosine kinases which are crucial for migration, repulsion and adhesion during neuronal, vascular and epithelial development. Binds promiscuously Eph receptors residing on adjacent cells, leading to contact-dependent bidirectional signaling into neighboring cells. The signaling pathway downstream of the receptor is referred to as forward signaling while the signaling pathway downstream of the ephrin ligand is referred to as reverse signaling. With the EPHA2 receptor may play a role in bone remodeling through regulation of osteoclastogenesis and osteoblastogenesis. The chain is Ephrin-A2 (Efna2) from Mus musculus (Mouse).